Reading from the N-terminus, the 416-residue chain is Thyroid hormone receptor alpha (416 aa).

Polar residues predominate over residues 1 to 13; sequence MEPMSNKQDSNSS. The disordered stretch occupies residues 1 to 37; sequence MEPMSNKQDSNSSEGDEKGWPDVPKRKRKNSQCSMKS. Positions 1-58 are modulating; it reads MEPMSNKQDSNSSEGDEKGWPDVPKRKRKNSQCSMKSMSALSVSVPGYIPSYLEKDEP. Residues 15–24 are compositionally biased toward basic and acidic residues; sequence GDEKGWPDVP. 8 residues coordinate Zn(2+): cysteine 59, cysteine 62, cysteine 76, cysteine 79, cysteine 97, cysteine 103, cysteine 113, and cysteine 116. 2 NR C4-type zinc fingers span residues 59–79 and 97–121; these read CVVC…CEGC and CKYE…FKKC. Residues 59 to 133 constitute a DNA-binding region (nuclear receptor); sequence CVVCGDKATG…VGMAMDLVLD (75 aa). The 245-residue stretch at 169-413 folds into the NR LBD domain; sequence AEWELIRMAT…PPLFLEVFED (245 aa). Arginine 234 lines the 3,3',5-triiodo-L-thyronine pocket.

The protein belongs to the nuclear hormone receptor family. NR1 subfamily.

Its subcellular location is the nucleus. Its function is as follows. Nuclear hormone receptor that can act as a repressor or activator of transcription. High affinity receptor for thyroid hormones, including triiodothyronine and thyroxine. This Hippoglossus hippoglossus (Atlantic halibut) protein is Thyroid hormone receptor alpha (thra).